Here is a 500-residue protein sequence, read N- to C-terminus: Hexose transporter 1 (500 aa).

Residues 1–25 (MKNSNEISSSQSLKNNGSDGFFNTS) are Cytoplasmic-facing. The chain crosses the membrane as a helical span at residues 26–46 (LMYVLAACLASFLFGYQVSVL). Over 47–75 (NTIKDFIVIEFGWCAGKEVNCDDSTLKSS) the chain is Extracellular. Cys-60 and Cys-67 are oxidised to a cystine. The chain crosses the membrane as a helical span at residues 76–96 (FLLASVFIGAVVGSGFSGFLV). The Cytoplasmic segment spans residues 97–101 (QHGRR). A helical transmembrane segment spans residues 102–122 (FSLLVIYNFFILVSILTSITH). Topologically, residues 123–131 (HFHTILFSR) are extracellular. A helical transmembrane segment spans residues 132–152 (LLSGFGIGLITVSVPMYISEM). Residues 153-166 (THKDKKGAYGVLHQ) lie on the Cytoplasmic side of the membrane. Gln-166 serves as a coordination point for alpha-D-glucose. Gln-166 is a binding site for beta-D-glucose. A helical transmembrane segment spans residues 167 to 187 (LFITFGIFIAVLLGMAMGNVP). The Extracellular segment spans residues 188–203 (EEVNNPLGTFQQIWWR). A helical membrane pass occupies residues 204–224 (LMFFFPCIISILGIVLLTFFF). At 225–289 (KEETPYYLFE…RAMKIPSYRY (65 aa)) the chain is on the cytoplasmic side. A helical membrane pass occupies residues 290–310 (VILLGCILSGLQQFTGINVLV). Residues Gln-301, Gln-302, and Asn-307 each contribute to the alpha-D-glucose site. Gln-301 is a binding site for beta-D-glucose. Asn-307 is a beta-D-glucose binding site. Residues 311-327 (SNSNALYKGFLTNEWIT) are Extracellular-facing. A helical transmembrane segment spans residues 328–348 (TLSVIMTVVNFLMTFPAIYIV). Beta-D-glucose is bound at residue Asn-337. The Cytoplasmic portion of the chain corresponds to 349–356 (EKLGRKTL). The chain crosses the membrane as a helical span at residues 357–377 (LLCGCAGIVCAFLPTAIANLI). Over 378–390 (NNTSDVVKKLSIS) the chain is Extracellular. A helical transmembrane segment spans residues 391 to 411 (ATFVMIVSFAVSYGPVLWIYL). Trp-408 provides a ligand contact to alpha-D-glucose. Residues 412–425 (HEMFPSEIKDSAAS) are Cytoplasmic-facing. The helical transmembrane segment at 426–446 (LASLVNWMCAIIVVFPSDIII) threads the bilayer. Residues 447–451 (KQSPT) lie on the Extracellular side of the membrane. A helical membrane pass occupies residues 452-472 (ILFFIFSGMSIVAFLFIFFFI). The Cytoplasmic segment spans residues 473–500 (KETKGGEIGTSPYITLEERQKHMGKSVV).

This sequence belongs to the major facilitator superfamily. Sugar transporter (TC 2.A.1.1) family. As to quaternary structure, homodimer.

Its subcellular location is the cell membrane. It carries out the reaction D-glucose(out) = D-glucose(in). The enzyme catalyses D-fructose(out) = D-fructose(in). The catalysed reaction is D-galactose(in) = D-galactose(out). It catalyses the reaction D-mannose(out) = D-mannose(in). It carries out the reaction D-glucosamine(out) = D-glucosamine(in). The enzyme catalyses D-xylose(out) = D-xylose(in). With respect to regulation, inhibited by cytochalasin B. Sodium-independent facilitative hexose transporter. Can transport D-glucose and D-fructose. Can transport D-mannose, D-galactose, D-xylose and D-glucosamine. This Plasmodium knowlesi protein is Hexose transporter 1.